The following is a 285-amino-acid chain: Meiotically up-regulated gene 125 protein (285 aa).

The protein localises to the cytoplasm. Its subcellular location is the nucleus. In terms of biological role, has a role in meiosis. The protein is Meiotically up-regulated gene 125 protein (mug125) of Schizosaccharomyces pombe (strain 972 / ATCC 24843) (Fission yeast).